The chain runs to 213 residues: Alkylbase DNA glycosidase-like protein mag2 (213 aa).

Lys53, Leu54, Ser61, His91, Gly94, Ser96, Lys97, Lys99, Glu102, Lys137, Gly138, Lys140, Thr143, Ser163, and Thr164 together coordinate DNA.

Belongs to the alkylbase DNA glycosidase AlkA family.

It localises to the nucleus. In terms of biological role, alkylbase DNA glycosidase-like protein that shows no DNA glycosylase activity for alkylated bases. The molecular role of mag2 appears to be abasic (AP) site recognition and protection, while possibly facilitating damage signaling by structurally sculpting the DNA substrate. Stimulates AP site binding to mismatch repair protein mutS. In Schizosaccharomyces pombe (strain 972 / ATCC 24843) (Fission yeast), this protein is Alkylbase DNA glycosidase-like protein mag2.